The sequence spans 368 residues: Agmatine deiminase (368 aa).

Residue Cys-357 is the Amidino-cysteine intermediate of the active site.

Belongs to the agmatine deiminase family. Homodimer.

It carries out the reaction agmatine + H2O = N-carbamoylputrescine + NH4(+). Its pathway is amine and polyamine biosynthesis; putrescine biosynthesis via agmatine pathway; N-carbamoylputrescine from agmatine: step 1/1. Functionally, mediates the hydrolysis of agmatine into N-carbamoylputrescine in the arginine decarboxylase (ADC) pathway of putrescine biosynthesis, a basic polyamine. The protein is Agmatine deiminase of Pseudomonas fluorescens (strain SBW25).